The chain runs to 1405 residues: Tonsoku-like protein (1405 aa).

TPR repeat units lie at residues 23–56 (AVSC…YASM), 63–96 (AKAK…AKRL), 163–196 (ARCY…SKTH), 203–237 (HLCY…AKRF), 245–278 (CETL…NTPD), 314–347 (KGLY…AELN), and 355–388 (VPIY…NQDA). Residues 153–181 (ISKLEQLDMQARCYLNIGVVKEHMEAFQE) form an LRR 1 repeat. One copy of the LRR 2 repeat lies at 439 to 465 (MVRLRRLMLKHNMQVLVENLEADATAK). The interval 465–535 (KGIDLDQEES…RGNRTLVIKK (71 aa)) is disordered. A compositionally biased stretch (acidic residues) spans 469-483 (LDQEESVGDDEEESD). 3 ANK repeats span residues 538-567 (KGET…TVNV), 571-600 (AGWL…ASAI), and 609-638 (DGIT…DATV). Disordered regions lie at residues 695–753 (FNAK…KEYR), 806–827 (KRIN…DTAL), and 841–880 (TPEN…KKHQ). Residues S707 and S709 each carry the phosphoserine modification. The segment covering 813-822 (LSRRTSKENF) has biased composition (basic and acidic residues). Residues 841-850 (TPENEYSQRQ) are compositionally biased toward polar residues. Residues 859-874 (SRSSSMSSNHSSSATS) are compositionally biased toward low complexity. A phosphoserine mark is found at S893, S895, S899, and S902. LRR repeat units follow at residues 1085–1108 (QARL…QLAK), 1113–1137 (LLQL…LLCG), 1143–1166 (LELL…ILSK), 1186–1211 (LTEL…QLTQ), 1287–1311 (AKQL…YILD), and 1333–1357 (LQKL…VFSM).

The protein belongs to the Tonsoku family.

The protein resides in the nucleus. It localises to the nucleoplasm. Its subcellular location is the chromosome. Its function is as follows. Histone reader involved in homologous recombination-mediated repair of double-strand breaks (DSBs) at stalled or collapsed replication forks. Specifically recognizes and binds histone H3.1. The chain is Tonsoku-like protein from Drosophila melanogaster (Fruit fly).